We begin with the raw amino-acid sequence, 431 residues long: MSVNVNRSVSDQFYRYKMPRLIAKVEGKGNGIKTVIVNMVDVAKALNRPPTYPTKYFGCELGAQTQFDVKNDRYIVNGSHEANKLQDMLDGFIKKFVLCPECENPETDLHVNPKKQTIGNSCKACGYRGMLDTHHKLCTFILKNPPENSDSGTGKKEKEKKNRKGKDKENGSVSSSETPPPPPPPNEISPPPHTMEEEEDDDWGEDTTEEAQRRRMDEISDHAKVLTLSDDLERTIEERVNILFDFVKKKKEEGVIDSSDKEIVAEAERLDVKAMGPLVLTEVLFNEKIREQIKKYRRHFLRFCHNNKKAQRYLLHGLECVVAMHQAQLISKIPHILKEMYDADLLEEEVIISWSEKASKKYVSKELAKEIRVKAEPFIKWLKEAEEESSGGEEDDEDENIEVVYSKTASVPKVETVKSDNKDDDIDIDAI.

Ser-10 carries the post-translational modification Phosphoserine. Position 27–34 (27–34) interacts with GTP; it reads GKGNGIKT. The interval 143-216 is disordered; it reads KNPPENSDSG…TTEEAQRRRM (74 aa). Basic and acidic residues predominate over residues 153–170; sequence TGKKEKEKKNRKGKDKEN. The span at 178 to 193 shows a compositional bias: pro residues; it reads TPPPPPPPNEISPPPH. Residues 196-209 are compositionally biased toward acidic residues; that stretch reads EEEEDDDWGEDTTE. Thr-227 is modified (phosphothreonine). Phosphoserine occurs at positions 229, 389, 390, and 410. In terms of domain architecture, W2 spans 233-392; it reads ERTIEERVNI…KEAEEESSGG (160 aa). Glycyl lysine isopeptide (Lys-Gly) (interchain with G-Cter in SUMO2) cross-links involve residues Lys-413 and Lys-418. Position 419 is a phosphoserine (Ser-419).

Belongs to the eIF-2-beta/eIF-5 family. Component of the 43S pre-initiation complex (43S PIC), which is composed of the 40S ribosomal subunit, EIF1, eIF1A (EIF1AX), eIF3 complex, EIF5 and eIF2-GTP-initiator tRNA complex (eIF2 ternary complex). Interacts with eIF1A (EIF1AX) during scanning. Interacts through its C-terminal domain (CTD) with EIF1 or with eIF2-beta (EIF2S2) (mutually exclusive) through a common binding site. Interacts through its C-terminal domain (CTD) with the CTD of EIF5B. Interacts with FMR1 isoform 6; this interaction occurs in a RNA-dependent manner.

Its subcellular location is the cytoplasm. In terms of biological role, component of the 43S pre-initiation complex (43S PIC), which binds to the mRNA cap-proximal region, scans mRNA 5'-untranslated region, and locates the initiation codon. In this complex, acts as a GTPase-activating protein, by promoting GTP hydrolysis by eIF2G (EIF2S3). During scanning, interacts with both EIF1 (via its C-terminal domain (CTD)) and EIF1A (via its NTD). This interaction with EIF1A contributes to the maintenance of EIF1 within the open 43S PIC. When start codon is recognized, EIF5, via its NTD, induces eIF2G (EIF2S3) to hydrolyze the GTP. Start codon recognition also induces a conformational change of the PIC to a closed state. This change increases the affinity of EIF5-CTD for EIF2-beta (EIF2S2), which allows the release, by an indirect mechanism, of EIF1 from the PIC. Finally, EIF5 stabilizes the PIC in its closed conformation. The chain is Eukaryotic translation initiation factor 5 (EIF5) from Pongo abelii (Sumatran orangutan).